The chain runs to 450 residues: C4-dicarboxylate transport protein (450 aa).

The next 8 helical transmembrane spans lie at 25-45, 56-76, 90-110, 162-182, 200-220, 234-254, 319-339, and 367-387; these read VVFA…YGAA, LIKM…IASM, MAYF…VANV, ILQV…VGDA, LVNI…AFTI, LVLT…GAVA, IYMT…LTLG, and AATL…ILGV.

It belongs to the dicarboxylate/amino acid:cation symporter (DAACS) (TC 2.A.23) family.

The protein resides in the cell inner membrane. In terms of biological role, responsible for the transport of dicarboxylates such as succinate, fumarate, and malate from the periplasm across the membrane. This Acidovorax sp. (strain JS42) protein is C4-dicarboxylate transport protein.